The chain runs to 565 residues: Putative serine protease pcp-1 (565 aa).

Residues 1 to 17 (MRWFLVLLLVALVSVEA) form the signal peptide. Asn69, Asn107, and Asn126 each carry an N-linked (GlcNAc...) asparagine glycan. The active-site Charge relay system is the Ser177. Asn240, Asn244, Asn257, Asn271, Asn319, and Asn347 each carry an N-linked (GlcNAc...) asparagine glycan. Catalysis depends on charge relay system residues Asp451 and His479.

The protein belongs to the peptidase S28 family.

This chain is Putative serine protease pcp-1 (pcp-1), found in Caenorhabditis elegans.